A 487-amino-acid chain; its full sequence is Cyclic AMP-dependent transcription factor ATF-2 (487 aa).

The segment at 7–31 (FLCTAPGCGQRFTNEDHLAVHKHKH) adopts a C2H2-type zinc-finger fold. The residue at position 34 (Thr-34) is a Phosphothreonine; by PKC/PRKCH. Ser-44 is subject to Phosphoserine; by VRK1. Residues Thr-51 and Thr-53 each carry the phosphothreonine modification. Thr-55 is modified (phosphothreonine; by VRK1). 2 positions are modified to phosphoserine: Ser-72 and Ser-94. Thr-98 bears the Phosphothreonine mark. Ser-103 bears the Phosphoserine; by PKC/PRKCA and PKC/PRKCB mark. Disordered regions lie at residues 107–130 (EPSV…TNDE) and 241–355 (PGIP…RQKR). Ser-118 carries the post-translational modification Phosphoserine. A compositionally biased stretch (polar residues) spans 264–275 (LTQQHPPVTNGD). The segment at 278–281 (KGHG) is essential for its histone acetyltransferase activity. Low complexity predominate over residues 300-316 (PATSTTETPASPAHTTP). Ser-310 is modified (phosphoserine). Phosphoserine; by PKC/PRKCA and PKC/PRKCB is present on Ser-322. The span at 328 to 345 (AANEDPDEKRRKFLERNR) shows a compositional bias: basic and acidic residues. The bZIP domain maps to 334–397 (DEKRRKFLER…AQLKQLLLAH (64 aa)). Residues 336-356 (KRRKFLERNRAAASRCRQKRK) are basic motif. Residue Lys-339 is modified to N6-acetyllysine. Position 349 is a phosphoserine; by PKC/PRKCA and PKC/PRKCB (Ser-349). At Lys-356 the chain carries N6-acetyllysine. A leucine-zipper region spans residues 362-390 (LEKKAEDLSSLNGQLQSEVTLLRNEVAQL). The Nuclear export signal signature appears at 387–396 (VAQLKQLLLA). The tract at residues 407–487 (KKSGYHTADK…PSSQAQPSGS (81 aa)) is disordered. Ser-424 and Ser-428 each carry phosphoserine. A compositionally biased stretch (polar residues) spans 425–436 (VPSSPHTEAIQH). The span at 437–449 (SSVSTSNGVSSTS) shows a compositional bias: low complexity. A compositionally biased stretch (polar residues) spans 457-470 (SVLTQMADQSTEPA). Residues Ser-472 and Ser-480 each carry the phosphoserine; by ATM modification. The span at 478–487 (PSSQAQPSGS) shows a compositional bias: polar residues.

It belongs to the bZIP family. ATF subfamily. Binds DNA as a dimer and can form a homodimer in the absence of DNA. Can form a heterodimer with JUN. Heterodimerization is essential for its transcriptional activity. Interacts with SMAD3 and SMAD4. Binds through its N-terminal region to UTF1 which acts as a coactivator of ATF2 transcriptional activity. Interacts with the HK1/VDAC1 complex. Interacts with NBN, MRE11, XPO1, KAT5 and CUL3. Phosphorylation of Thr-51 by MAPK14 and MAPK11, and at Thr-53 by MAPK1/ERK2, MAPK3/ERK1, MAPK11, MAPK12 and MAPK14 in response to external stimulus like insulin causes increased transcriptional activity. Phosphorylated by PLK3 following hyperosmotic stress. Also phosphorylated and activated by JNK and CaMK4. ATM-mediated phosphorylation at Ser-472 and Ser-480 stimulates its function in DNA damage response. Phosphorylation at Ser-44, Thr-55 and Ser-103 activates its transcriptional activity. Phosphorylation at Thr-51 or Thr-53 enhances acetylation of histones H2B and H4.

The protein localises to the nucleus. Its subcellular location is the cytoplasm. It localises to the mitochondrion outer membrane. Transcriptional activator which regulates the transcription of various genes, including those involved in anti-apoptosis, cell growth, and DNA damage response. Dependent on its binding partner, binds to CRE (cAMP response element) consensus sequences (5'-TGACGTCA-3') or to AP-1 (activator protein 1) consensus sequences (5'-TGACTCA-3'). In the nucleus, contributes to global transcription and the DNA damage response, in addition to specific transcriptional activities that are related to cell development, proliferation and death. In the cytoplasm, interacts with and perturbs HK1- and VDAC1-containing complexes at the mitochondrial outer membrane, thereby impairing mitochondrial membrane potential, inducing mitochondrial leakage and promoting cell death. The phosphorylated form (mediated by ATM) plays a role in the DNA damage response and is involved in the ionizing radiation (IR)-induced S phase checkpoint control and in the recruitment of the MRN complex into the IR-induced foci (IRIF). Exhibits histone acetyltransferase (HAT) activity which specifically acetylates histones H2B and H4 in vitro. In concert with CUL3 and RBX1, promotes the degradation of KAT5 thereby attenuating its ability to acetylate and activate ATM. Can elicit oncogenic or tumor suppressor activities depending on the tissue or cell type. The protein is Cyclic AMP-dependent transcription factor ATF-2 (Atf2) of Rattus norvegicus (Rat).